The sequence spans 340 residues: tRNA-dihydrouridine(20/20a) synthase (340 aa).

Residues 22–24 (PMM) and Gln-75 contribute to the FMN site. Cys-105 (proton donor) is an active-site residue. FMN contacts are provided by residues Lys-144, His-177, 217-219 (NGG), and 239-240 (GR).

It belongs to the Dus family. DusA subfamily. FMN is required as a cofactor.

The catalysed reaction is 5,6-dihydrouridine(20) in tRNA + NADP(+) = uridine(20) in tRNA + NADPH + H(+). The enzyme catalyses 5,6-dihydrouridine(20) in tRNA + NAD(+) = uridine(20) in tRNA + NADH + H(+). It catalyses the reaction 5,6-dihydrouridine(20a) in tRNA + NADP(+) = uridine(20a) in tRNA + NADPH + H(+). It carries out the reaction 5,6-dihydrouridine(20a) in tRNA + NAD(+) = uridine(20a) in tRNA + NADH + H(+). Functionally, catalyzes the synthesis of 5,6-dihydrouridine (D), a modified base found in the D-loop of most tRNAs, via the reduction of the C5-C6 double bond in target uridines. Specifically modifies U20 and U20a in tRNAs. In Xylella fastidiosa (strain 9a5c), this protein is tRNA-dihydrouridine(20/20a) synthase.